The chain runs to 244 residues: Phosphoadenosine 5'-phosphosulfate reductase (244 aa).

Cys-239 acts as the Nucleophile; cysteine thiosulfonate intermediate in catalysis.

It belongs to the PAPS reductase family. CysH subfamily.

It localises to the cytoplasm. It carries out the reaction [thioredoxin]-disulfide + sulfite + adenosine 3',5'-bisphosphate + 2 H(+) = [thioredoxin]-dithiol + 3'-phosphoadenylyl sulfate. Its pathway is sulfur metabolism; hydrogen sulfide biosynthesis; sulfite from sulfate: step 3/3. Catalyzes the formation of sulfite from phosphoadenosine 5'-phosphosulfate (PAPS) using thioredoxin as an electron donor. This chain is Phosphoadenosine 5'-phosphosulfate reductase, found in Escherichia coli O81 (strain ED1a).